Consider the following 352-residue polypeptide: Elongation factor Tu, mitochondrial (352 aa).

One can recognise a tr-type G domain in the interval 45–241 (RPHVNVGTIG…AIDTHIPLPH (197 aa)). The G1 stretch occupies residues 54–61 (GHVDHGKT). 5 residues coordinate GTP: Asp57, Gly59, Lys60, Thr61, and Thr62. Thr61 is a binding site for Mg(2+). The tract at residues 95-99 (GITIN) is G2. The segment at 116-119 (DCPG) is G3. Asn171, Asp174, Ser209, Ala210, and Leu211 together coordinate GTP. The segment at 171–174 (NKAD) is G4. The interval 209–211 (SAL) is G5.

The protein localises to the mitochondrion. The enzyme catalyses GTP + H2O = GDP + phosphate + H(+). In terms of biological role, GTP hydrolase that promotes the GTP-dependent binding of aminoacyl-tRNA to the A-site of ribosomes during protein biosynthesis. The protein is Elongation factor Tu, mitochondrial of Gallus gallus (Chicken).